We begin with the raw amino-acid sequence, 299 residues long: Bifunctional protein FolD (299 aa).

NADP(+) is bound by residues 169 to 171 (GRS), Ser-194, and Ile-235.

Belongs to the tetrahydrofolate dehydrogenase/cyclohydrolase family. In terms of assembly, homodimer.

It catalyses the reaction (6R)-5,10-methylene-5,6,7,8-tetrahydrofolate + NADP(+) = (6R)-5,10-methenyltetrahydrofolate + NADPH. The enzyme catalyses (6R)-5,10-methenyltetrahydrofolate + H2O = (6R)-10-formyltetrahydrofolate + H(+). Its pathway is one-carbon metabolism; tetrahydrofolate interconversion. Its function is as follows. Catalyzes the oxidation of 5,10-methylenetetrahydrofolate to 5,10-methenyltetrahydrofolate and then the hydrolysis of 5,10-methenyltetrahydrofolate to 10-formyltetrahydrofolate. The polypeptide is Bifunctional protein FolD (Trichormus variabilis (strain ATCC 29413 / PCC 7937) (Anabaena variabilis)).